The chain runs to 699 residues: MSKINKLEHIRNIGICAHIDAGKTTTTERILYYTGKSHKIGEVHEGGATMDWMEQEQERGITITSAATTCRWQDKIINIIDTPGHVDFTIEVERSLRVLDGAVAVFDGVAGVEPQSETVWRQADKYNVPRMCFVNKMDRMGADFYRCVEMLKDRLGAKPLVIQLPVGIEENFKGIIDLIKMKAVIWKDEALGAEYFEEDIPADMKDKAEEYRAKLLDMVVELDDHVMEKYLSGEEVTAEEIKRLIRKGTISAAFYPVLCGSAFKNKGVQPLLDAVVDFLPSPIDIGIVKGMEVSTGEETDFPISVTEPFAALAFKIMNDPFVGSLTFIRIYSGKITSGTTVINTVKNKREKIGRMLLMHANNREDVKEASAGDIVALAGLKDTTTGDTLSDIDQQVILERMEFPEPVIELAVEPKSTADQEKMGLALSRLAAEDPSFRVSTDYETGQTVIKGMGELHLEIIIDRMRREFKVEANIGAPQVAYRETITKVCEIDYTHKKQSGGAGQFARVKIIFEPLKEVKDLKDEDKNKNFVFESKIIGGAVPKEYIPGVEKGLNNIRETGVIAGYPMIDFKATLVDGAFHDVDSSVLAFEIAAKAAFREGMPKGNPKLLEPIMQVEVITPDEYMGDIIGDLNSRRGQIQSMDPRGNAQVVTANVPLAEMFGYVNTLRSLSQGRAQFSMIFSHYDQVPSQVADIIKAKK.

Residues 8 to 283 (EHIRNIGICA…AVVDFLPSPI (276 aa)) enclose the tr-type G domain. GTP-binding positions include 17–24 (AHIDAGKT), 81–85 (DTPGH), and 135–138 (NKMD).

Belongs to the TRAFAC class translation factor GTPase superfamily. Classic translation factor GTPase family. EF-G/EF-2 subfamily.

The protein resides in the cytoplasm. Functionally, catalyzes the GTP-dependent ribosomal translocation step during translation elongation. During this step, the ribosome changes from the pre-translocational (PRE) to the post-translocational (POST) state as the newly formed A-site-bound peptidyl-tRNA and P-site-bound deacylated tRNA move to the P and E sites, respectively. Catalyzes the coordinated movement of the two tRNA molecules, the mRNA and conformational changes in the ribosome. The sequence is that of Elongation factor G from Rickettsia rickettsii (strain Iowa).